Reading from the N-terminus, the 172-residue chain is Large ribosomal subunit protein uL10 (172 aa).

The protein belongs to the universal ribosomal protein uL10 family. In terms of assembly, part of the ribosomal stalk of the 50S ribosomal subunit. The N-terminus interacts with L11 and the large rRNA to form the base of the stalk. The C-terminus forms an elongated spine to which L12 dimers bind in a sequential fashion forming a multimeric L10(L12)X complex.

Its function is as follows. Forms part of the ribosomal stalk, playing a central role in the interaction of the ribosome with GTP-bound translation factors. The polypeptide is Large ribosomal subunit protein uL10 (Rhodopseudomonas palustris (strain BisA53)).